A 160-amino-acid polypeptide reads, in one-letter code: Ribosome maturation factor RimP (160 aa).

It belongs to the RimP family.

The protein resides in the cytoplasm. In terms of biological role, required for maturation of 30S ribosomal subunits. The protein is Ribosome maturation factor RimP of Orientia tsutsugamushi (strain Ikeda) (Rickettsia tsutsugamushi).